The following is a 279-amino-acid chain: MNITLGYIDPVAFSLGPIQVRWYGIIIACGILLGYFIAQAALKQVGLHKDTLIDIIFYSAIVGFIVARIYFVTFQWPYYMNHLSEIPKIWHGGIAIHGGLIGGLISGIIVCKIKNLHPFQIGDIVAPSIILAQGIGRWGNFMNHEAHGGPVSRAFLEHLHLPDFIIRNMYIEGQYYHPTFLYESIWDVIGFVILITLRKRLKLGETFFGYLIWYSVGRFFVEAMRTDSLMLTSHIRVAQLVSVVLIMISVIFVIYRRVKYQPIKYENSGPLTWPIKKAK.

The next 3 membrane-spanning stretches (helical) occupy residues 22 to 42 (WYGI…QAAL), 52 to 72 (LIDI…IYFV), and 89 to 109 (IWHG…SGII). A 1,2-diacyl-sn-glycero-3-phospho-(1'-sn-glycerol) is bound at residue Arg137. 2 helical membrane passes run 203-223 (LGET…FVEA) and 235-255 (IRVA…FVIY).

It belongs to the Lgt family.

Its subcellular location is the cell membrane. The enzyme catalyses L-cysteinyl-[prolipoprotein] + a 1,2-diacyl-sn-glycero-3-phospho-(1'-sn-glycerol) = an S-1,2-diacyl-sn-glyceryl-L-cysteinyl-[prolipoprotein] + sn-glycerol 1-phosphate + H(+). It participates in protein modification; lipoprotein biosynthesis (diacylglyceryl transfer). Functionally, catalyzes the transfer of the diacylglyceryl group from phosphatidylglycerol to the sulfhydryl group of the N-terminal cysteine of a prolipoprotein, the first step in the formation of mature lipoproteins. The protein is Phosphatidylglycerol--prolipoprotein diacylglyceryl transferase of Staphylococcus epidermidis (strain ATCC 35984 / DSM 28319 / BCRC 17069 / CCUG 31568 / BM 3577 / RP62A).